Reading from the N-terminus, the 350-residue chain is tRNA uridine(34) hydroxylase (350 aa).

The 95-residue stretch at 146–240 (DDPDAIFIDM…YARRAREQGL (95 aa)) folds into the Rhodanese domain. Cys-200 functions as the Cysteine persulfide intermediate in the catalytic mechanism. The segment at 318-350 (QRRRRAGREKGNKIFNKSRGRLNSKLGIPDPTE) is disordered.

Belongs to the TrhO family.

It carries out the reaction uridine(34) in tRNA + AH2 + O2 = 5-hydroxyuridine(34) in tRNA + A + H2O. Functionally, catalyzes oxygen-dependent 5-hydroxyuridine (ho5U) modification at position 34 in tRNAs. The polypeptide is tRNA uridine(34) hydroxylase (Salmonella arizonae (strain ATCC BAA-731 / CDC346-86 / RSK2980)).